A 344-amino-acid polypeptide reads, in one-letter code: MIEINQVNKVFYQGSKEIHALKDINLHIAEGTIFGVIGSSGAGKSTLIRCVNMLEAPTSGSIVVDGVDLTKLSKKQLSETRRNIGMIFQHFNLLSSRTVFDNVALPLELAGKDKEQIQSKVTELLKLVGLADKHESYPANLSGGQKQRVAIARALASDPKVLLCDEATSALDPATTQSILELLKEINRKLKITILLITHEMDVVKSICHEVAIIGGGELVEKGTVGEIFAHPKTELAHDFIRSTLDLSIPEDYQVRLQPTRVAGSYPLVRLEFTGATVDAPLVSQISRKYNIDISILSSDLDYAGGVKFGMMVAELFGNEEDDNAAIEYLREHNVKVEVLGYVL.

One can recognise an ABC transporter domain in the interval 2-241 (IEINQVNKVF…PKTELAHDFI (240 aa)). 38–45 (GSSGAGKS) serves as a coordination point for ATP.

The protein belongs to the ABC transporter superfamily. Methionine importer (TC 3.A.1.24) family. In terms of assembly, the complex is composed of two ATP-binding proteins (MetN), two transmembrane proteins (MetI) and a solute-binding protein (MetQ).

Its subcellular location is the cell inner membrane. It carries out the reaction L-methionine(out) + ATP + H2O = L-methionine(in) + ADP + phosphate + H(+). It catalyses the reaction D-methionine(out) + ATP + H2O = D-methionine(in) + ADP + phosphate + H(+). Functionally, part of the ABC transporter complex MetNIQ involved in methionine import. Responsible for energy coupling to the transport system. This Vibrio vulnificus (strain CMCP6) protein is Methionine import ATP-binding protein MetN.